The sequence spans 80 residues: Dermaseptin-DA3 (80 aa).

Residues 1–22 (MAFLKKSLFLVLFLGLVSLSIC) form the signal peptide. The propeptide occupies 23 to 42 (EEKRENEDEEEQEDDEQSEE). Residues 24–48 (EKRENEDEEEQEDDEQSEEKRGMWS) form a disordered region. A compositionally biased stretch (acidic residues) spans 29 to 40 (EDEEEQEDDEQS). Leu-77 is subject to Leucine amide. A propeptide spanning residues 79–80 (EQ) is cleaved from the precursor.

This sequence belongs to the frog skin active peptide (FSAP) family. Dermaseptin subfamily. Expressed by the skin glands.

The protein resides in the secreted. Possesses a potent antimicrobial activity against Gram-positive and Gram-negative bacteria. Probably acts by disturbing membrane functions with its amphipathic structure. This is Dermaseptin-DA3 from Agalychnis dacnicolor (Giant Mexican leaf frog).